The primary structure comprises 293 residues: B1-hordein (293 aa).

The first 19 residues, 1-19, serve as a signal peptide directing secretion; it reads MKTFLIFALLAIAATSTIA. A disordered region spans residues 20–90; sequence QQQPFPQQPI…PPFWQQKPFP (71 aa). Residues 25–81 show a composition bias toward pro residues; the sequence is PQQPIPQQPQPYPQQPQPYPQQPFPPQQPFPQQPVPQQPQPYPQQPFPPQQPFPQQP.

This sequence belongs to the gliadin/glutenin family. In terms of tissue distribution, developing endosperm.

In terms of biological role, sulfur-rich seed storage protein. This chain is B1-hordein, found in Hordeum vulgare (Barley).